We begin with the raw amino-acid sequence, 627 residues long: Transketolase-like protein 2 (627 aa).

A substrate-binding site is contributed by H39. Thiamine diphosphate-binding positions include S42, H79, and 125–127; that span reads GSL. D157 lines the Mg(2+) pocket. The thiamine diphosphate site is built by G158 and N187. Mg(2+) contacts are provided by N187 and L189. Thiamine diphosphate contacts are provided by K249 and H263. Substrate contacts are provided by H263, R323, and S350. Residues E371 and F397 each contribute to the thiamine diphosphate site. Residue E371 is the Proton donor of the active site. H421 and D429 together coordinate substrate. Q433 contacts thiamine diphosphate. R479 is a binding site for substrate.

The protein belongs to the transketolase family. As to quaternary structure, homodimer. The cofactor is Mg(2+). Ca(2+) serves as cofactor. Requires Mn(2+) as cofactor. Co(2+) is required as a cofactor. It depends on thiamine diphosphate as a cofactor.

It catalyses the reaction D-sedoheptulose 7-phosphate + D-glyceraldehyde 3-phosphate = aldehydo-D-ribose 5-phosphate + D-xylulose 5-phosphate. In terms of biological role, plays an essential role in total transketolase activity and cell proliferation in cancer cells; after transfection with anti-TKTL1 siRNA, total transketolase activity dramatically decreases and proliferation was significantly inhibited in cancer cells. Plays a pivotal role in carcinogenesis. In Mus musculus (Mouse), this protein is Transketolase-like protein 2 (Tktl2).